The primary structure comprises 538 residues: Nucleobase-ascorbate transporter 7 (538 aa).

A compositionally biased stretch (gly residues) spans 1–11; sequence MAGGGGGGGGV. A disordered region spans residues 1 to 20; it reads MAGGGGGGGGVAPPLKHDGL. 12 consecutive transmembrane segments (helical) span residues 45–65, 81–101, 103–123, 143–163, 166–186, 191–211, 229–249, 295–315, 372–394, 398–420, 432–452, and 471–491; these read AILL…LIPT, MVQT…FFGT, LPAV…IILA, IQGA…SGLW, VVRL…GFGL, FPLL…LLLF, FAVI…TVGG, FAMM…YIVV, VVQI…AIFA, APVV…LSLL, FILG…NQYT, and INVP…FLDV.

Belongs to the nucleobase:cation symporter-2 (NCS2) (TC 2.A.40) family. In terms of tissue distribution, expressed exclusively in ovules.

It is found in the cell membrane. The chain is Nucleobase-ascorbate transporter 7 (NAT7) from Arabidopsis thaliana (Mouse-ear cress).